The following is a 570-amino-acid chain: Urease subunit alpha (570 aa).

Positions 133-570 (GGIDNHIHYI…LPLAQLYNLF (438 aa)) constitute a Urease domain. The Ni(2+) site is built by His138, His140, and Lys221. The residue at position 221 (Lys221) is an N6-carboxylysine. His223 provides a ligand contact to substrate. 2 residues coordinate Ni(2+): His250 and His276. The active-site Proton donor is His324. Position 364 (Asp364) interacts with Ni(2+).

The protein belongs to the metallo-dependent hydrolases superfamily. Urease alpha subunit family. Heterotrimer of UreA (gamma), UreB (beta) and UreC (alpha) subunits. Three heterotrimers associate to form the active enzyme. Requires Ni cation as cofactor. Carboxylation allows a single lysine to coordinate two nickel ions.

It is found in the cytoplasm. It catalyses the reaction urea + 2 H2O + H(+) = hydrogencarbonate + 2 NH4(+). The protein operates within nitrogen metabolism; urea degradation; CO(2) and NH(3) from urea (urease route): step 1/1. This is Urease subunit alpha from Cytophaga hutchinsonii (strain ATCC 33406 / DSM 1761 / CIP 103989 / NBRC 15051 / NCIMB 9469 / D465).